The sequence spans 288 residues: MCKKRNAEINAEFDIIKKYCIYIGNIPFFASKNDVVVKFAEYGETCNIYMQSNKPHCDVKPAIVRYRSRKSVDKSLCLNNSKFGNTILIVLPLSLPYSRYLLTYDTCIVVYINDKNSCKTSMAELYDEFQKIGDIQNMFKTTNNMIYINFESEKSMQLSLATKPFLINNNIFKIKKVERNINMCGLNSESQDFSTNLKKKLLYNRSIGIFGLPSNATEERIAQIFSRFGDIQKITLICDVVGNSKQYGFIYYKKRTSANAAKVIMDGENFEGNKISVRFVPEKKVFKN.

RRM domains lie at 19-94, 108-179, and 205-282; these read YCIY…LPLS, IVVY…KVER, and RSIG…FVPE.

Male determiner protein (M-factor) that controls male somatic sexual differentiation. Acts as a dominant factor that regulates the mRNA splicing of doublesex (dsx) or fruitless (fru) transcripts and promotes expression of male splice forms of dsx and fru. In Aedes aegypti (Yellowfever mosquito), this protein is Male determiner protein Nix.